We begin with the raw amino-acid sequence, 127 residues long: Odontogenesis-associated phosphoprotein (127 aa).

Residues 1 to 23 (MAPGFHFSWLLVSWLVVTTVKGQ) form the signal peptide.

Expressed in enamel organs and not expressed in the heart, kidney, or spleen.

It localises to the secreted. May promote nucleation of hydroxyapatite. This Rattus norvegicus (Rat) protein is Odontogenesis-associated phosphoprotein.